A 137-amino-acid polypeptide reads, in one-letter code: Large ribosomal subunit protein uL16 (137 aa).

The protein belongs to the universal ribosomal protein uL16 family. Part of the 50S ribosomal subunit.

Functionally, binds 23S rRNA and is also seen to make contacts with the A and possibly P site tRNAs. The polypeptide is Large ribosomal subunit protein uL16 (Mesoplasma florum (strain ATCC 33453 / NBRC 100688 / NCTC 11704 / L1) (Acholeplasma florum)).